The following is a 305-amino-acid chain: Ribonuclease Z (305 aa).

Zn(2+) is bound by residues His-61, His-63, Asp-65, His-66, His-138, Asp-208, and His-266. Residue Asp-65 is the Proton acceptor of the active site.

The protein belongs to the RNase Z family. In terms of assembly, homodimer. Zn(2+) is required as a cofactor.

It catalyses the reaction Endonucleolytic cleavage of RNA, removing extra 3' nucleotides from tRNA precursor, generating 3' termini of tRNAs. A 3'-hydroxy group is left at the tRNA terminus and a 5'-phosphoryl group is left at the trailer molecule.. In terms of biological role, zinc phosphodiesterase, which displays some tRNA 3'-processing endonuclease activity. Probably involved in tRNA maturation, by removing a 3'-trailer from precursor tRNA. In Methanosarcina mazei (strain ATCC BAA-159 / DSM 3647 / Goe1 / Go1 / JCM 11833 / OCM 88) (Methanosarcina frisia), this protein is Ribonuclease Z.